Reading from the N-terminus, the 275-residue chain is Integrase homolog (275 aa).

The segment covering 88–111 (RVSQDRQAQGRERRSVLLPQERRG) has biased composition (basic and acidic residues). Positions 88–120 (RVSQDRQAQGRERRSVLLPQERRGSSGRQPLYS) are disordered.

This sequence belongs to the 'phage' integrase family.

In terms of biological role, integrase-recombinase proteins are responsible for catalyzing strand exchange between DNA molecules and play an important role in the DNA replication. May be required for the formation of concatameric complex replicative intermediates and/or their resolution before encapsidation. This Dryophytes versicolor (chameleon treefrog) protein is Integrase homolog (INT).